The chain runs to 591 residues: Aspartate--tRNA(Asp/Asn) ligase (591 aa).

Glutamate 174 serves as a coordination point for L-aspartate. The aspartate stretch occupies residues 198–201; that stretch reads QLFK. Arginine 220 is a binding site for L-aspartate. ATP is bound by residues 220–222 and glutamine 229; that span reads RDE. Histidine 450 contributes to the L-aspartate binding site. Glutamate 483 contributes to the ATP binding site. Residue arginine 490 coordinates L-aspartate. ATP is bound at residue 535–538; sequence GLDR.

It belongs to the class-II aminoacyl-tRNA synthetase family. Type 1 subfamily. Homodimer.

It is found in the cytoplasm. It catalyses the reaction tRNA(Asx) + L-aspartate + ATP = L-aspartyl-tRNA(Asx) + AMP + diphosphate. Functionally, aspartyl-tRNA synthetase with relaxed tRNA specificity since it is able to aspartylate not only its cognate tRNA(Asp) but also tRNA(Asn). Reaction proceeds in two steps: L-aspartate is first activated by ATP to form Asp-AMP and then transferred to the acceptor end of tRNA(Asp/Asn). This is Aspartate--tRNA(Asp/Asn) ligase from Pseudomonas putida (strain GB-1).